Reading from the N-terminus, the 411-residue chain is Citrate synthase (411 aa).

Catalysis depends on residues histidine 304 and aspartate 363.

The protein belongs to the citrate synthase family.

It carries out the reaction oxaloacetate + acetyl-CoA + H2O = citrate + CoA + H(+). Its pathway is carbohydrate metabolism; tricarboxylic acid cycle; isocitrate from oxaloacetate: step 1/2. This Rickettsia parkeri protein is Citrate synthase (gltA).